The following is a 399-amino-acid chain: Argininosuccinate synthase (399 aa).

Residues 10–18 and Ala-38 contribute to the ATP site; that span reads AYSGGVDTS. Residue Tyr-89 participates in L-citrulline binding. Gly-119 contacts ATP. L-aspartate contacts are provided by Thr-121, Asn-125, and Asp-126. Residue Asn-125 coordinates L-citrulline. 5 residues coordinate L-citrulline: Arg-129, Ser-177, Ser-186, Glu-262, and Tyr-274.

Belongs to the argininosuccinate synthase family. Type 1 subfamily. Homotetramer.

The protein localises to the cytoplasm. The enzyme catalyses L-citrulline + L-aspartate + ATP = 2-(N(omega)-L-arginino)succinate + AMP + diphosphate + H(+). Its pathway is amino-acid biosynthesis; L-arginine biosynthesis; L-arginine from L-ornithine and carbamoyl phosphate: step 2/3. In Acaryochloris marina (strain MBIC 11017), this protein is Argininosuccinate synthase.